The sequence spans 592 residues: MRTHYCGHLNKSLAGQTVELCGWVNRRRDLGGLIFIDMRDREGIVQVVVDPDMADAYAVASQLRNEFCIKLTGEVRTRPESQVNKEMATGEVEILAKGLEIINRSDVLPLDFNQKNSEEQRLKYRYLDLRRPEMSDRIKLRAKASSFVRRFLDDNGFLDIETPVLTKATPEGARDYLVPSRVHKGSFYALPQSPQLFKQLLMMSGFDRYYQIVKCFRDEDLRADRQPEFTQIDIETSFMTSDQVRAVTEKMVREMWLELLNVDLGEFPVMPFSEAIRRFGSDKPDLRNPLELVDVADLVKDVDFKVFSGPANDEKGRVAVIRVPGGAELTRKQIDEYTGFVNIYGAKGLAWMKVNDRAAGMEGIQSPVAKFLSEDVINGILERTQAESGDIILFGADKANIVAEALGALRLKLGKDLGLTKEGTWAPLWVVDFPMFEEDDEGNLHAMHHPFTSPLGLTAEELKANPAPAISNAYDMVLNGYEVGGGSVRIHNAEMQAAVFDILGIDADEQKLKFGFLLDALKFGTPPHAGLAFGLDRLVMLLCGTENIRDVIAFPKTTAAACLMTDAPSVANPAALEELAIAVTVAKEKSAE.

Glu171 contacts L-aspartate. The aspartate stretch occupies residues 195 to 198; it reads QLFK. Arg217 contributes to the L-aspartate binding site. Residues 217-219 and Gln226 each bind ATP; that span reads RDE. His448 serves as a coordination point for L-aspartate. Glu482 provides a ligand contact to ATP. Arg489 is a binding site for L-aspartate. 534–537 provides a ligand contact to ATP; sequence GLDR.

Belongs to the class-II aminoacyl-tRNA synthetase family. Type 1 subfamily. Homodimer.

It localises to the cytoplasm. It carries out the reaction tRNA(Asp) + L-aspartate + ATP = L-aspartyl-tRNA(Asp) + AMP + diphosphate. Its function is as follows. Catalyzes the attachment of L-aspartate to tRNA(Asp) in a two-step reaction: L-aspartate is first activated by ATP to form Asp-AMP and then transferred to the acceptor end of tRNA(Asp). The protein is Aspartate--tRNA ligase of Vibrio vulnificus (strain CMCP6).